Consider the following 332-residue polypeptide: Glycerol-3-phosphate dehydrogenase [NAD(P)+] (332 aa).

Ser-10, Trp-11, Lys-31, and Lys-105 together coordinate NADPH. Positions 105, 136, and 138 each coordinate sn-glycerol 3-phosphate. An NADPH-binding site is contributed by Ala-140. Sn-glycerol 3-phosphate is bound by residues Lys-191, Asp-244, Ser-254, Arg-255, and Asn-256. The active-site Proton acceptor is the Lys-191. Residue Arg-255 participates in NADPH binding. NADPH contacts are provided by Val-279 and Glu-281.

It belongs to the NAD-dependent glycerol-3-phosphate dehydrogenase family.

It localises to the cytoplasm. The catalysed reaction is sn-glycerol 3-phosphate + NAD(+) = dihydroxyacetone phosphate + NADH + H(+). The enzyme catalyses sn-glycerol 3-phosphate + NADP(+) = dihydroxyacetone phosphate + NADPH + H(+). The protein operates within membrane lipid metabolism; glycerophospholipid metabolism. Its function is as follows. Catalyzes the reduction of the glycolytic intermediate dihydroxyacetone phosphate (DHAP) to sn-glycerol 3-phosphate (G3P), the key precursor for phospholipid synthesis. This Anaeromyxobacter sp. (strain K) protein is Glycerol-3-phosphate dehydrogenase [NAD(P)+].